We begin with the raw amino-acid sequence, 223 residues long: ATP phosphoribosyltransferase (223 aa).

It belongs to the ATP phosphoribosyltransferase family. Short subfamily. Heteromultimer composed of HisG and HisZ subunits.

Its subcellular location is the cytoplasm. It catalyses the reaction 1-(5-phospho-beta-D-ribosyl)-ATP + diphosphate = 5-phospho-alpha-D-ribose 1-diphosphate + ATP. The protein operates within amino-acid biosynthesis; L-histidine biosynthesis; L-histidine from 5-phospho-alpha-D-ribose 1-diphosphate: step 1/9. Its function is as follows. Catalyzes the condensation of ATP and 5-phosphoribose 1-diphosphate to form N'-(5'-phosphoribosyl)-ATP (PR-ATP). Has a crucial role in the pathway because the rate of histidine biosynthesis seems to be controlled primarily by regulation of HisG enzymatic activity. The chain is ATP phosphoribosyltransferase from Bordetella pertussis (strain Tohama I / ATCC BAA-589 / NCTC 13251).